The sequence spans 369 residues: ERCC4 domain-containing protein EP364R (369 aa).

The 99-residue stretch at 3 to 101 (FLVADHREHH…QLYFFVEGPA (99 aa)) folds into the ERCC4 domain. Residues 339 to 369 (PLHDVSDDASSDASSPTGHQTLSKEMSLNTA) form a disordered region. Over residues 354–369 (PTGHQTLSKEMSLNTA) the composition is skewed to polar residues.

The protein belongs to the asfivirus EP364R family.

Functionally, plays a role in the inhibition of type I interferon signaling pathway. Mechanistically, specifically interacts with 2',3'-cGAMP and cleaves it via its phosphodiesterase activity. In turn, prevents 2',3'-cGAMP interaction with host ER-resident STING1 leading to inhibition of downstream signaling pathway and type I interferon production. The sequence is that of ERCC4 domain-containing protein EP364R from African swine fever virus (isolate Tick/South Africa/Pretoriuskop Pr4/1996) (ASFV).